A 937-amino-acid chain; its full sequence is Translation initiation factor IF-2 (937 aa).

Disordered regions lie at residues I61–Q156 and L171–I274. The segment covering A179–H196 has biased composition (basic and acidic residues). Over residues E197 to I208 the composition is skewed to basic residues. The span at E237 to K252 shows a compositional bias: basic and acidic residues. Residues E436 to K605 enclose the tr-type G domain. The tract at residues G445–T452 is G1. Residue G445–T452 participates in GTP binding. A G2 region spans residues G470–H474. Positions D491–G494 are G3. GTP is bound by residues D491–H495 and N545–D548. Residues N545 to D548 are G4. The G5 stretch occupies residues S581 to K583.

Belongs to the TRAFAC class translation factor GTPase superfamily. Classic translation factor GTPase family. IF-2 subfamily.

The protein localises to the cytoplasm. One of the essential components for the initiation of protein synthesis. Protects formylmethionyl-tRNA from spontaneous hydrolysis and promotes its binding to the 30S ribosomal subunits. Also involved in the hydrolysis of GTP during the formation of the 70S ribosomal complex. The sequence is that of Translation initiation factor IF-2 from Helicobacter pylori (strain G27).